Here is a 481-residue protein sequence, read N- to C-terminus: Aromatic amino acid aminotransferase DDB_G0272014 (481 aa).

At K300 the chain carries N6-(pyridoxal phosphate)lysine.

This sequence belongs to the class-I pyridoxal-phosphate-dependent aminotransferase family. Pyridoxal 5'-phosphate serves as cofactor.

It localises to the cytoplasm. It carries out the reaction an aromatic L-alpha-amino acid + 2-oxoglutarate = an aromatic oxo-acid + L-glutamate. Functionally, has aromatic amino acid transaminase activity. This chain is Aromatic amino acid aminotransferase DDB_G0272014, found in Dictyostelium discoideum (Social amoeba).